Here is a 256-residue protein sequence, read N- to C-terminus: Major prion protein (256 aa).

A signal peptide spans 1-24; sequence MVKSHIGSWILVLFVAMWSDVGLC. The interaction with GRB2, ERI3 and SYN1 stretch occupies residues 25-233; it reads KKRPKPGGGW…ESEAYYQRGA (209 aa). Residues 28–110 are disordered; sequence PKPGGGWNTG…QWNKPSKPKT (83 aa). 5 consecutive repeat copies span residues 54–62, 63–70, 71–78, 79–86, and 87–95. The tract at residues 54–95 is 5 X 8 AA tandem repeats of P-H-G-G-G-W-G-Q; sequence PQGGGGWGQPHGGGWGQPHGGGWGQPHGGGWGQPHGGGGWGQ. The span at 55–97 shows a compositional bias: gly residues; sequence QGGGGWGQPHGGGWGQPHGGGWGQPHGGGWGQPHGGGGWGQGG. Cu(2+)-binding residues include H64, G65, G66, H72, G73, G74, H80, G81, G82, H88, G90, and G91. Residues C182 and C217 are joined by a disulfide bond. N-linked (GlcNAc...) asparagine glycans are attached at residues N184 and N200. Residue A233 is the site of GPI-anchor amidated alanine attachment. Positions 234–256 are cleaved as a propeptide — removed in mature form; the sequence is SVILFSSPPVILLISFLIFLIVG.

Belongs to the prion family. As to quaternary structure, monomer and homodimer. Has a tendency to aggregate into amyloid fibrils containing a cross-beta spine, formed by a steric zipper of superposed beta-strands. Soluble oligomers may represent an intermediate stage on the path to fibril formation. Copper binding may promote oligomerization. Interacts with GRB2, APP, ERI3/PRNPIP and SYN1. Mislocalized cytosolically exposed PrP interacts with MGRN1; this interaction alters MGRN1 subcellular location and causes lysosomal enlargement. Interacts with KIAA1191.

It is found in the cell membrane. It localises to the golgi apparatus. In terms of biological role, its primary physiological function is unclear. Has cytoprotective activity against internal or environmental stresses. May play a role in neuronal development and synaptic plasticity. May be required for neuronal myelin sheath maintenance. May play a role in iron uptake and iron homeostasis. Soluble oligomers are toxic to cultured neuroblastoma cells and induce apoptosis (in vitro). Association with GPC1 (via its heparan sulfate chains) targets PRNP to lipid rafts. Also provides Cu(2+) or Zn(2+) for the ascorbate-mediated GPC1 deaminase degradation of its heparan sulfate side chains. The polypeptide is Major prion protein (PRNP) (Cervus elaphus (Red deer)).